The following is a 434-amino-acid chain: Bcl-2-like protein 13 (434 aa).

The BH4 motif lies at 14–30; that stretch reads ETKYVVLSYLGLLSQEK. The residue at position 35 (serine 35) is a Phosphoserine. The BH3 motif lies at 97–113; that stretch reads IEDCLAHLGERVSQDLK. Residues 144 to 154 carry the BH1 motif; sequence ASGWNKLLVPL. The BH2 signature appears at 190 to 203; sequence FIIQQGGWGSVFSL. Positions 224-245 are disordered; the sequence is LPSDNSGQVSPPESPTVTTSWQ. Residues 226-245 show a composition bias toward polar residues; that stretch reads SDNSGQVSPPESPTVTTSWQ. The stretch at 243-253 is one A repeat; sequence SWQSESLPVSL. 7 positions are modified to phosphoserine: serine 256, serine 258, serine 300, serine 343, serine 347, serine 377, and serine 387. The stretch at 258–268 is one A; approximate repeat; sequence SWHTESLPVSL. Residues 282 to 303 form a disordered region; the sequence is EVKSLDSSGAGEKSENNSSNSD. A disordered region spans residues 363–398; sequence RPEAVERAEGAAQLSEERAGSRKKSHTGEAAAVRGA. A compositionally biased stretch (basic and acidic residues) spans 365–382; the sequence is EAVERAEGAAQLSEERAG. Residues 409-429 form a helical membrane-spanning segment; the sequence is VLLFGGAAAVAILAVAVGVAL.

It belongs to the Bcl-2 family. As to quaternary structure, monomer.

The protein localises to the mitochondrion membrane. Its function is as follows. May promote the activation of caspase-3 and apoptosis. The protein is Bcl-2-like protein 13 (Bcl2l13) of Mus musculus (Mouse).